A 386-amino-acid chain; its full sequence is Pepsin A (386 aa).

The first 15 residues, methionine 1–cysteine 15, serve as a signal peptide directing secretion. Residues alanine 16 to valine 60 constitute a propeptide, activation peptide. The region spanning tyrosine 74–alanine 383 is the Peptidase A1 domain. The active site involves aspartate 92. 2 disulfide bridges follow: cysteine 105-cysteine 110 and cysteine 266-cysteine 270. The active site involves aspartate 275. Cysteines 309 and 342 form a disulfide.

It belongs to the peptidase A1 family.

The protein resides in the secreted. It catalyses the reaction Preferential cleavage: hydrophobic, preferably aromatic, residues in P1 and P1' positions. Cleaves 1-Phe-|-Val-2, 4-Gln-|-His-5, 13-Glu-|-Ala-14, 14-Ala-|-Leu-15, 15-Leu-|-Tyr-16, 16-Tyr-|-Leu-17, 23-Gly-|-Phe-24, 24-Phe-|-Phe-25 and 25-Phe-|-Tyr-26 bonds in the B chain of insulin.. Shows particularly broad specificity; although bonds involving phenylalanine and leucine are preferred, many others are also cleaved to some extent. In Canis lupus familiaris (Dog), this protein is Pepsin A (PGA).